The primary structure comprises 662 residues: FAST kinase domain-containing protein 3, mitochondrial (662 aa).

The RAP domain occupies 591-649; sequence IALCIDGPKRFCSNSKHLLGKEAIKQRHLQLLGYQVVQIPYHEIGMLKSRRELVEYLQR.

It belongs to the FAST kinase family. As to expression, expression detected in spleen, thymus, testis, ovary, colon, heart, smooth muscle, kidney, brain, lung, liver and white adipose tissue with highest expression in liver and thyroid.

It localises to the mitochondrion. Its function is as follows. Required for normal mitochondrial respiration. Increases steady-state levels and half-lives of a subset of mature mitochondrial mRNAs MT-ND2, MT-ND3, MT-CYTB, MT-CO2, and MT-ATP8/6. Promotes MT-CO1 mRNA translation and increases mitochondrial complex IV assembly and activity. The sequence is that of FAST kinase domain-containing protein 3, mitochondrial (FASTKD3) from Homo sapiens (Human).